Reading from the N-terminus, the 794-residue chain is Protocadherin beta-6 (794 aa).

Residues 1-27 form the signal peptide; the sequence is MMQTKVQNKKRQVAFFILLMLWGEVGS. The Extracellular segment spans residues 28 to 688; that stretch reads ESIQYSVLEE…AQADLLTVYL (661 aa). Cadherin domains are found at residues 34 to 132, 137 to 241, 246 to 345, 350 to 449, and 454 to 559; these read VLEE…APEF, MLLK…VPEF, YEAQ…APEL, FISP…APAF, and YTLF…SPFV. A glycan (N-linked (GlcNAc...) asparagine) is linked at asparagine 46. Cysteine 95 and cysteine 101 are oxidised to a cystine. The N-linked (GlcNAc...) asparagine glycan is linked to asparagine 183. Asparagine 416 carries N-linked (GlcNAc...) asparagine glycosylation. N-linked (GlcNAc...) asparagine glycosylation is present at asparagine 565. One can recognise a Cadherin 6 domain in the interval 566–669; sequence GSAPCTELVP…LVDGFSQPYL (104 aa). A helical transmembrane segment spans residues 689-709; it reads VVALASVSSLFLFSVLLFVAV. Residues 710 to 794 are Cytoplasmic-facing; that stretch reads RLCRRSRAAS…PTSRNSFPFS (85 aa). Residues 773 to 794 are disordered; the sequence is PPQGTEREMEETPTSRNSFPFS. The segment covering 784 to 794 has biased composition (polar residues); that stretch reads TPTSRNSFPFS.

In terms of assembly, forms homodimers in trans (molecules expressed by two different cells). Forms promiscuous heterodimers in cis (at the plasma membrane of the same cell) with other protocadherins.

Its subcellular location is the cell membrane. Calcium-dependent cell-adhesion protein involved in cells self-recognition and non-self discrimination. Thereby, it is involved in the establishment and maintenance of specific neuronal connections in the brain. This chain is Protocadherin beta-6, found in Pan troglodytes (Chimpanzee).